A 57-amino-acid polypeptide reads, in one-letter code: Andropin (57 aa).

An N-terminal signal peptide occupies residues 1–23 (MKYFVVLVVLALILAITVGPSDA).

Belongs to the andropin family. In terms of tissue distribution, ejaculatory duct of adult males.

The protein localises to the secreted. Its function is as follows. Male-specific peptide with moderate activity against Gram-positive bacteria. In Drosophila mauritiana (Fruit fly), this protein is Andropin (Anp).